The primary structure comprises 99 residues: Plastocyanin (99 aa).

Positions 1-99 (VEVLLGASDG…AGMVGQVTVN (99 aa)) constitute a Plastocyanin-like domain. Cu cation contacts are provided by H37, C84, H87, and M92.

Belongs to the plastocyanin family. The cofactor is Cu(2+).

The protein resides in the plastid. It localises to the chloroplast thylakoid membrane. In terms of biological role, participates in electron transfer between P700 and the cytochrome b6-f complex in photosystem I. This Vicia faba (Broad bean) protein is Plastocyanin (PETE).